Here is a 160-residue protein sequence, read N- to C-terminus: Early E3 18.5 kDa glycoprotein (160 aa).

The N-terminal stretch at 1 to 17 is a signal peptide; it reads MIRYIILGLLTLASAHG. Topologically, residues 18–124 are lumenal; that stretch reads TTQKVDFKEP…PPQNCVENTG (107 aa). Cystine bridges form between cysteine 29–cysteine 46 and cysteine 40–cysteine 101. N-linked (GlcNAc...) asparagine; by host glycosylation is found at asparagine 30 and asparagine 79. Residues 125–145 form a helical membrane-spanning segment; that stretch reads TFCCTAMLITVLALVCTLLYI. Over 146–160 the chain is Cytoplasmic; that stretch reads KYKSRRSFIEEKKMP. The short motif at 157 to 160 is the Di-lysine motif element; the sequence is KKMP.

Belongs to the adenoviridae E19 family. Both disulfide bonds are absolutely critical for the interaction with MHC antigens. Post-translationally, N-glycosylated; high-mannose.

It is found in the host endoplasmic reticulum membrane. Binds and retains class I heavy chains in the endoplasmic reticulum during the early period of virus infection, thereby impairing their transport to the cell surface. Also delays the expression of class I alleles that it cannot affect by direct retention. Binds transporters associated with antigen processing (TAP) and acts as a tapasin inhibitor, preventing class I/TAP association. In consequence, infected cells are masked for immune recognition by cytotoxic T-lymphocytes. The polypeptide is Early E3 18.5 kDa glycoprotein (Homo sapiens (Human)).